The following is a 290-amino-acid chain: Fructose-1,6-bisphosphatase class 1 (290 aa).

E78, D96, L98, and D99 together coordinate Mg(2+). Substrate contacts are provided by residues 99–102, Y201, and K226; that span reads DGSS. E232 lines the Mg(2+) pocket.

Belongs to the FBPase class 1 family. As to quaternary structure, homotetramer. It depends on Mg(2+) as a cofactor.

Its subcellular location is the cytoplasm. It carries out the reaction beta-D-fructose 1,6-bisphosphate + H2O = beta-D-fructose 6-phosphate + phosphate. The protein operates within carbohydrate biosynthesis; gluconeogenesis. The protein is Fructose-1,6-bisphosphatase class 1 of Helicobacter pylori (strain Shi470).